Consider the following 225-residue polypeptide: Insulin-induced gene 2 protein (225 aa).

Topologically, residues 1 to 28 (MAENDAKPTLPKKSGPYISSVTSHGMNL) are cytoplasmic. The chain crosses the membrane as a helical span at residues 29–51 (VIRGIVLFFIGVFLALVLNLLQI). Topologically, residues 52–70 (QRNVTLFPPDVITSIFSSA) are lumenal. A helical membrane pass occupies residues 71 to 88 (WWVPPCCGTASAVIGLLY). Topologically, residues 89 to 103 (PCMDRHLGEPHKFKR) are cytoplasmic. A helical membrane pass occupies residues 104–126 (EWSSVMRCVAVFVGINHASAKVD). The Lumenal portion of the chain corresponds to 127–129 (FAN). A helical membrane pass occupies residues 130–148 (NIQLSLTLAALSIGLWWTF). The Cytoplasmic segment spans residues 149–153 (DRSRS). Residues 154–175 (GFGLGVGIAFLATLVSQLLVYN) form a helical membrane-spanning segment. At 176–189 (GVYQYTSPDFLYVR) the chain is on the lumenal side. Residues 190-207 (SWLPCIFFAGGITMGNIG) form a helical membrane-spanning segment. Residues 208–225 (RQLAMYECKVIAEKSHED) are Cytoplasmic-facing. The KxHxx motif lies at 219–225 (AEKSHED).

This sequence belongs to the INSIG family. In terms of assembly, interacts with SCAP; interaction is direct and only takes place in the presence of sterols; it prevents interaction between SCAP and the coat protein complex II (COPII). Associates with the SCAP-SREBP complex; association is mediated via its interaction with SCAP and only takes place in the presence of sterols.

The protein localises to the endoplasmic reticulum membrane. Its function is as follows. Oxysterol-binding protein that mediates feedback control of cholesterol synthesis by controlling both endoplasmic reticulum to Golgi transport of SCAP and degradation of HMGCR. Acts as a negative regulator of cholesterol biosynthesis by mediating the retention of the SCAP-SREBP complex in the endoplasmic reticulum, thereby blocking the processing of sterol regulatory element-binding proteins (SREBPs). Binds oxysterol, including 22-hydroxycholesterol, 24-hydroxycholesterol, 25-hydroxycholesterol and 27-hydroxycholesterol, regulating interaction with SCAP and retention of the SCAP-SREBP complex in the endoplasmic reticulum. In presence of oxysterol, interacts with SCAP, retaining the SCAP-SREBP complex in the endoplasmic reticulum, thereby preventing SCAP from escorting SREBPs to the Golgi. Sterol deprivation reduces oxysterol-binding, disrupting the interaction between INSIG2 and SCAP, thereby promoting Golgi transport of the SCAP-SREBP complex, followed by processing and nuclear translocation of SREBPs. Also regulates cholesterol synthesis by regulating degradation of HMGCR. The protein is Insulin-induced gene 2 protein of Gallus gallus (Chicken).